Here is a 525-residue protein sequence, read N- to C-terminus: MSQDIHAHRILILDFGSQYTQLIARRVREIGVYCEIHPFDMSNEAIIAFAPRGIILAGGPESVHEADSPRAPQAVFDLKVPLFGICYGMQTMAEQMGGKVQGSDVREFGYARVDVVGKARLLDGIEDHVDDDGVLGLDVWMSHGDKVTEMPAGFHILASTPSCPIAAMADDARAYYGVQFHPEVTHTKQGLRILSRFVLDICGCAALWTPSNIVDDAIATVRAQVGSSKVLLGLSGGVDSSVVAALLHKAIGDQLTCVFVDNGLLRLHEGDQVMAMFAENMGVKVIRANAEDKFLGRLAGVADPEEKRKIIGRTFIEVFDEEATKLQDVKFLAQGTIYPDVIESAGAKTGKAHVIKSHHNVGGLPEDMQFELVEPLRELFKDEVRKIGLELGLPYDMVYRHPFPGPGLGVRILGEVKKEYADLLRQADHIFIEELRAFDWYHKTSQAFVVFQPVKSVGVVGDGRRYAWVVALRAVETIDFMTARWAHLPYELLEKVSNRIINEIAGISRVTYDVSSKPPATIEWE.

The Glutamine amidotransferase type-1 domain occupies R9–L207. The active-site Nucleophile is C86. Catalysis depends on residues H181 and E183. The 193-residue stretch at W208–R400 folds into the GMPS ATP-PPase domain. Position 235–241 (S235–S241) interacts with ATP.

In terms of assembly, homodimer.

The catalysed reaction is XMP + L-glutamine + ATP + H2O = GMP + L-glutamate + AMP + diphosphate + 2 H(+). Its pathway is purine metabolism; GMP biosynthesis; GMP from XMP (L-Gln route): step 1/1. Its function is as follows. Catalyzes the synthesis of GMP from XMP. The sequence is that of GMP synthase [glutamine-hydrolyzing] from Pseudomonas aeruginosa (strain UCBPP-PA14).